A 728-amino-acid polypeptide reads, in one-letter code: UvrABC system protein C (728 aa).

The GIY-YIG domain occupies 16 to 95 (DSPGVYRFRD…IKEYDPRFNV (80 aa)). Residues 208–243 (GTYLRRLERQMAEAAEEMEYERAARLRDDIGALKKA) enclose the UVR domain. 2 disordered regions span residues 473–535 (ADGE…GRPK) and 689–728 (VNTA…GQER). Positions 487–505 (GDAAPNGDAAPNDGAAPDD) are enriched in low complexity.

This sequence belongs to the UvrC family. Interacts with UvrB in an incision complex.

It localises to the cytoplasm. In terms of biological role, the UvrABC repair system catalyzes the recognition and processing of DNA lesions. UvrC both incises the 5' and 3' sides of the lesion. The N-terminal half is responsible for the 3' incision and the C-terminal half is responsible for the 5' incision. The polypeptide is UvrABC system protein C (Streptomyces coelicolor (strain ATCC BAA-471 / A3(2) / M145)).